Reading from the N-terminus, the 513-residue chain is V-type proton ATPase subunit B (513 aa).

Position 375 (arginine 375) interacts with ATP. Over residues 484-503 (ADRKGKGKDKPTTKDTRDTA) the composition is skewed to basic and acidic residues. Residues 484 to 513 (ADRKGKGKDKPTTKDTRDTAAPEEENLIDA) form a disordered region. Residues 504–513 (APEEENLIDA) are compositionally biased toward acidic residues.

Belongs to the ATPase alpha/beta chains family. As to quaternary structure, V-ATPase is a heteromultimeric enzyme composed of a peripheral catalytic V1 complex (components A to H) attached to an integral membrane V0 proton pore complex (components: a, c, c', c'', d, e, f and VOA1).

The protein resides in the vacuole membrane. Its function is as follows. Non-catalytic subunit of the V1 complex of vacuolar(H+)-ATPase (V-ATPase), a multisubunit enzyme composed of a peripheral complex (V1) that hydrolyzes ATP and a membrane integral complex (V0) that translocates protons. V-ATPase is responsible for acidifying and maintaining the pH of intracellular compartments. The sequence is that of V-type proton ATPase subunit B from Neurospora crassa (strain ATCC 24698 / 74-OR23-1A / CBS 708.71 / DSM 1257 / FGSC 987).